The following is a 195-amino-acid chain: Imidazoleglycerol-phosphate dehydratase (195 aa).

It belongs to the imidazoleglycerol-phosphate dehydratase family.

It localises to the cytoplasm. It catalyses the reaction D-erythro-1-(imidazol-4-yl)glycerol 3-phosphate = 3-(imidazol-4-yl)-2-oxopropyl phosphate + H2O. It functions in the pathway amino-acid biosynthesis; L-histidine biosynthesis; L-histidine from 5-phospho-alpha-D-ribose 1-diphosphate: step 6/9. This is Imidazoleglycerol-phosphate dehydratase from Campylobacter curvus (strain 525.92).